A 173-amino-acid polypeptide reads, in one-letter code: Photosystem I assembly protein Ycf3 (173 aa).

3 TPR repeats span residues 35-68 (AFAYYRDGMSAQSEGAYAEALENYYEALRLEEDP), 72-105 (SYTFYNIALIHTSNGDQTKALEYYRQALDLNPKM), and 120-153 (GEQAAEQGDMEMAEALFDQAAFYWKQAIRLAPDN).

The protein belongs to the Ycf3 family.

The protein resides in the plastid. It localises to the cyanelle thylakoid membrane. In terms of biological role, essential for the assembly of the photosystem I (PSI) complex. May act as a chaperone-like factor to guide the assembly of the PSI subunits. The protein is Photosystem I assembly protein Ycf3 of Cyanophora paradoxa.